The primary structure comprises 458 residues: UDP-N-acetylmuramate--L-alanine ligase (458 aa).

Residue 112–118 (GTHGKTT) coordinates ATP.

This sequence belongs to the MurCDEF family.

The protein localises to the cytoplasm. The enzyme catalyses UDP-N-acetyl-alpha-D-muramate + L-alanine + ATP = UDP-N-acetyl-alpha-D-muramoyl-L-alanine + ADP + phosphate + H(+). Its pathway is cell wall biogenesis; peptidoglycan biosynthesis. Functionally, cell wall formation. This is UDP-N-acetylmuramate--L-alanine ligase from Geotalea daltonii (strain DSM 22248 / JCM 15807 / FRC-32) (Geobacter daltonii).